The chain runs to 556 residues: Melanoma-associated antigen B4 (556 aa).

The segment covering 1–15 (MPRGQKSKARAREKR) has biased composition (basic residues). Residues 1–110 (MPRGQKSKAR…RFSENPQNDL (110 aa)) form a disordered region. Residues 39 to 73 (PSCSNQDSGDAVASTSTAGFPQKSKSQGEAPTTTA) are compositionally biased toward polar residues. Over residues 77 to 87 (GACRRSRKSTR) the composition is skewed to basic residues. In terms of domain architecture, MAGE spans 111–310 (LTRKTGMLMQ…QAFPTHYEEA (200 aa)). The tract at residues 315–335 (EERAQAEAVGSPGTSAKDKAE) is disordered. Position 325 is a phosphoserine (Ser-325). A run of 15 repeats spans residues 334 to 348 (AEAK…CKYQ), 349 to 363 (AESK…CKDQ), 364 to 378 (AESK…CKDN), 379 to 392 (AKSK…RKYK), 393 to 407 (AKSK…CKDQ), 408 to 421 (AESK…CKDQ), 422 to 436 (AESK…CKDQ), 437 to 451 (AESK…CKDQ), 452 to 466 (AESK…CKDK), 467 to 480 (AKSK…HKYK), 481 to 495 (AKSK…CKDQ), 496 to 510 (AESK…CKDQ), 511 to 525 (AESK…CKDN), 526 to 539 (AKSK…RKYK), and 540 to 554 (AKSK…GKDK). Residues 334–554 (AEAKVTLVDS…PLVDSSGKDK (221 aa)) form a 15 X 15 AA approximate tandem repeats region.

As to expression, expressed in testis (at protein level).

The protein localises to the cytoplasm. The sequence is that of Melanoma-associated antigen B4 from Mus musculus (Mouse).